The chain runs to 238 residues: 2,3,4,5-tetrahydropyridine-2,6-dicarboxylate N-acetyltransferase (238 aa).

Belongs to the transferase hexapeptide repeat family. DapH subfamily.

The catalysed reaction is (S)-2,3,4,5-tetrahydrodipicolinate + acetyl-CoA + H2O = L-2-acetamido-6-oxoheptanedioate + CoA. It functions in the pathway amino-acid biosynthesis; L-lysine biosynthesis via DAP pathway; LL-2,6-diaminopimelate from (S)-tetrahydrodipicolinate (acetylase route): step 1/3. Catalyzes the transfer of an acetyl group from acetyl-CoA to tetrahydrodipicolinate. This chain is 2,3,4,5-tetrahydropyridine-2,6-dicarboxylate N-acetyltransferase, found in Clostridioides difficile (strain 630) (Peptoclostridium difficile).